The following is a 394-amino-acid chain: Acid ceramidase (394 aa).

Residues 1 to 18 (MRGQSLLTWVLAAAVTCA) form the signal peptide. A disulfide bridge links Cys30 with Cys339. The Nucleophile role is filled by Cys142. Residues Asn172, Asn194, Asn258, Asn341, and Asn347 are each glycosylated (N-linked (GlcNAc...) asparagine). Cys387 and Cys391 are disulfide-bonded.

It belongs to the acid ceramidase family. In terms of assembly, heterodimer; disulfide-linked. The heterodimer is composed of the disulfide-linked alpha and beta chains produced by autocatalytic cleavage of the precursor. In terms of processing, N-glycosylated. Proteolytically cleaved into two chains alpha and beta that remain associated via a disulfide bond. Cleavage gives rise to a conformation change that activates the enzyme. The same catalytic Cys residue mediates the autoproteolytic cleavage and subsequent hydrolysis of lipid substrates. The beta chain may undergo an additional C-terminal processing. As to expression, widely expressed.

The protein localises to the lysosome. The protein resides in the secreted. The enzyme catalyses an N-acylsphing-4-enine + H2O = sphing-4-enine + a fatty acid. The catalysed reaction is N-dodecanoylsphing-4-enine + H2O = dodecanoate + sphing-4-enine. It catalyses the reaction N-(9Z-octadecenoyl)-sphing-4-enine + H2O = sphing-4-enine + (9Z)-octadecenoate. It carries out the reaction N-tetradecanoylsphing-4-enine + H2O = tetradecanoate + sphing-4-enine. The enzyme catalyses N-hexadecanoylsphing-4-enine + H2O = sphing-4-enine + hexadecanoate. The catalysed reaction is N-octadecanoylsphing-4-enine + H2O = sphing-4-enine + octadecanoate. It catalyses the reaction N-dodecanoyl-(4R)-hydroxysphinganine + H2O = (4R)-hydroxysphinganine + dodecanoate. It carries out the reaction N-(dodecanoyl)-sphinganine + H2O = dodecanoate + sphinganine. The enzyme catalyses N-(acetyl)-sphing-4-enine + H2O = sphing-4-enine + acetate. The catalysed reaction is N-(hexanoyl)sphing-4-enine + H2O = hexanoate + sphing-4-enine. It catalyses the reaction N-octanoylsphing-4-enine + H2O = octanoate + sphing-4-enine. It carries out the reaction N-dodecanoylethanolamine + H2O = dodecanoate + ethanolamine. It functions in the pathway lipid metabolism; sphingolipid metabolism. Lysosomal ceramidase that hydrolyzes sphingolipid ceramides into sphingosine and free fatty acids at acidic pH. Ceramides, sphingosine, and its phosphorylated form sphingosine-1-phosphate are bioactive lipids that mediate cellular signaling pathways regulating several biological processes including cell proliferation, apoptosis and differentiation. Has a higher catalytic efficiency towards C12-ceramides versus other ceramides. Also catalyzes the reverse reaction allowing the synthesis of ceramides from fatty acids and sphingosine. For the reverse synthetic reaction, the natural sphingosine D-erythro isomer is more efficiently utilized as a substrate compared to D-erythro-dihydrosphingosine and D-erythro-phytosphingosine, while the fatty acids with chain lengths of 12 or 14 carbons are the most efficiently used. Also has an N-acylethanolamine hydrolase activity. By regulating the levels of ceramides, sphingosine and sphingosine-1-phosphate in the epidermis, mediates the calcium-induced differentiation of epidermal keratinocytes. Also indirectly regulates tumor necrosis factor/TNF-induced apoptosis. By regulating the intracellular balance between ceramides and sphingosine, in adrenocortical cells, probably also acts as a regulator of steroidogenesis. The protein is Acid ceramidase of Mus musculus (Mouse).